The sequence spans 767 residues: MFPQNRPPTHLQASVATGAASGPPQSLKLTYPETLDRIKEEFQFLQSQYHSLKLECEKLATEKTEIQRHYVMYYEMSYGLNIEMHKQTEIAKRLNVICAQLVPFLSQEHQQQVVQAVERAKQVTMAELNAAIGVRFIPPQLTVHQLQAQHLSHHAPPIPLTPHPSSLQHPGLAAATSASSLLGYLVFLAFRHNLLQKRAADAEHRERDPGPSCLTLPNGERVPTLSDYLNSNTKRKTEEKDFGTDYGSDADRSEDNLVVDEDPASPHSVHSYSSRENGVDKPTLQRKDPPPASPNSMTSSSSVSPSRSKDIPSQQVEKAGTPGLKSSTPNSQSDLNTPGPSGTSASQFRSIATKPAIDSLALGLRTPLGGQGGYPAAFSIAHPSVNADGAGAYAGLHLMSPQINGATAAGTYGRSPLVSYDPHAHMRGLGSAIPGSASGKPAYSFHVSADGQMQPVPFPPDALIGSGIPRHARQLHVLNHGEVVCAVTISNSTRHVYTGGKGCVKVWDVGQPGTKTPVAQLDCLNRDNYIRSCKLLPDGRSLIVGGEASTLSIWDLASPTPRIKAELTSSAPACYALAISPDAKVCFSCCSDGNIVVWDLQNQTLVRQFQGHTDGASCIDISHDGTKLWTGGLDNTVRCWDLREGRQLQQHDFNSQIFSLGYCPTGEWLAVGMESSNIEVLHVSKPDKYQLHLHESCVLSLQFASCGKWFVSTGKDNLLNAWRTPYGASIFQSKESSSVLSCDVSTDDQFIVTGSGDKKATVYEVIY.

Disordered stretches follow at residues 1 to 26 (MFPQNRPPTHLQASVATGAASGPPQS) and 200 to 346 (ADAE…TSAS). Basic and acidic residues-rich tracts occupy residues 200-209 (ADAEHRERDP), 235-255 (RKTEEKDFGTDYGSDADRSED), and 277-289 (NGVDKPTLQRKDP). The interval 212-274 (SCLTLPNGER…SPHSVHSYSS (63 aa)) is CCN domain. A compositionally biased stretch (low complexity) spans 294 to 306 (PNSMTSSSSVSPS). The span at 324–346 (LKSSTPNSQSDLNTPGPSGTSAS) shows a compositional bias: polar residues. 6 WD repeats span residues 467-498 (GIPRHARQLHVLNHGEVVCAVTISNSTRHVYT), 525-555 (NRDNYIRSCKLLPDGRSLIVGGEASTLSIWD), 569-599 (SSAPACYALAISPDAKVCFSCCSDGNIVVWD), 611-641 (GHTDGASCIDISHDGTKLWTGGLDNTVRCWD), 693-723 (LHESCVLSLQFASCGKWFVSTGKDNLLNAWR), and 734-764 (KESSSVLSCDVSTDDQFIVTGSGDKKATVYE).

This sequence belongs to the WD repeat Groucho/TLE family. Ubiquitinated by XIAP/BIRC4. As to expression, abundantly expressed in brain, lung, testis and ovary in comparison with liver, heart, kidney and spleen. Ubiquitously expressed in the developing embryo. Present in unfertilized and fertilized eggs.

Its subcellular location is the nucleus. Nuclear effector molecule. The polypeptide is Transducin-like enhancer protein 1 (esg1) (Xenopus laevis (African clawed frog)).